Consider the following 341-residue polypeptide: S-adenosylmethionine:tRNA ribosyltransferase-isomerase (341 aa).

This sequence belongs to the QueA family. As to quaternary structure, monomer.

The protein localises to the cytoplasm. It catalyses the reaction 7-aminomethyl-7-carbaguanosine(34) in tRNA + S-adenosyl-L-methionine = epoxyqueuosine(34) in tRNA + adenine + L-methionine + 2 H(+). It functions in the pathway tRNA modification; tRNA-queuosine biosynthesis. In terms of biological role, transfers and isomerizes the ribose moiety from AdoMet to the 7-aminomethyl group of 7-deazaguanine (preQ1-tRNA) to give epoxyqueuosine (oQ-tRNA). The chain is S-adenosylmethionine:tRNA ribosyltransferase-isomerase from Clostridium botulinum (strain Langeland / NCTC 10281 / Type F).